Consider the following 1679-residue polypeptide: [F-actin]-monooxygenase mical2b (1679 aa).

The tract at residues 2-494 (GETEEERTSQ…RHLFISGEQD (493 aa)) is monooxygenase domain. Residues cysteine 97, 97-125 (CGFR…SRNN), glutamate 116, arginine 118, arginine 123, asparagine 125, and aspartate 398 each bind FAD. The region spanning 516–619 (EVRPGRLLLW…MVLYLSKFYE (104 aa)) is the Calponin-homology (CH) domain. The Nuclear localization signal signature appears at 658–679 (RKRIPKLDKKLEESDVNRKRKK). 8 disordered regions span residues 661–772 (IPKL…KAKW), 818–838 (SAYK…TPTL), 874–907 (SSLF…ESST), 1073–1163 (STRH…RSTA), 1194–1247 (KPED…DEIP), 1259–1283 (EYPK…ISFS), 1302–1342 (DLTN…PAPP), and 1473–1509 (RNKA…KKKE). Composition is skewed to basic and acidic residues over residues 662-674 (PKLD…SDVN) and 697-707 (GEREEQKENKV). Positions 874-888 (SSLFTGNPAQPQTDE) are enriched in polar residues. The LIM zinc-binding domain occupies 1011 to 1073 (DTCVFCQKRV…KMHFSQRKTS (63 aa)). Residues 1086 to 1099 (IRSSSITISNHTST) show a composition bias toward low complexity. Polar residues predominate over residues 1112 to 1123 (DSSTQQDLQTLP). A compositionally biased stretch (basic and acidic residues) spans 1133 to 1143 (EVKDSSKKADP). Positions 1144–1154 (ADSAPACPDSP) are enriched in low complexity. Over residues 1202–1211 (LAEEDGNSDF) the composition is skewed to acidic residues. Polar residues predominate over residues 1220 to 1242 (SKKPSNPSTDSNCLPTKDNSSTP). Residues 1259–1270 (EYPKPSSSSPEP) show a composition bias toward low complexity. Over residues 1302-1325 (DLTNPGKSGAEEQQQQHVKPSISL) the composition is skewed to polar residues. Residues 1333–1342 (THPQPEPAPP) show a composition bias toward pro residues. Residues 1475–1489 (KASAQQQQQQKSNSS) are compositionally biased toward low complexity. The bMERB domain maps to 1517-1667 (KSDELKRLHR…EKAEDRDLES (151 aa)).

It belongs to the Mical family. It depends on FAD as a cofactor.

It localises to the nucleus. The protein resides in the cytoplasm. It carries out the reaction L-methionyl-[F-actin] + NADPH + O2 + H(+) = L-methionyl-(R)-S-oxide-[F-actin] + NADP(+) + H2O. Functionally, nuclear monooxygenase that promotes depolymerization of F-actin by mediating oxidation of specific methionine residues on actin and regulates the srf signaling. Acts by modifying nuclear actin subunits through the addition of oxygen to form methionine-sulfoxide, leading to promote actin filament severing and prevent repolymerization. Acts as a key regulator of the srf signaling pathway elicited by nerve growth factor and serum: mediates oxidation and subsequent depolymerization of nuclear actin, leading to increase mkl1/mrtf-a presence in the nucleus and promote srf:mkl1/mrtf-a-dependent gene transcription. The chain is [F-actin]-monooxygenase mical2b from Danio rerio (Zebrafish).